We begin with the raw amino-acid sequence, 168 residues long: UPF0114 protein PC1_0431 (168 aa).

Transmembrane regions (helical) follow at residues 15–35 (LLAP…IKFF), 53–73 (LVLV…LVMV), and 136–156 (LMWY…MGYL).

The protein belongs to the UPF0114 family.

The protein resides in the cell membrane. This is UPF0114 protein PC1_0431 from Pectobacterium carotovorum subsp. carotovorum (strain PC1).